The chain runs to 500 residues: Matrilin-1 (500 aa).

The N-terminal stretch at 1-29 (MKVTSGPAFALCSLLLLLLLLLQVPDSLS) is a signal peptide. In terms of domain architecture, VWFA 1 spans 30-226 (LVPQPRGHLC…AKKFQEAFCV (197 aa)). A glycan (N-linked (GlcNAc...) asparagine) is linked at N80. Residues 227-267 (VSDLCATGDHDCEQLCVSSPGSYTCACHEGFTLNSDGKTCN) form the EGF-like domain. 3 cysteine pairs are disulfide-bonded: C231–C242, C238–C251, and C253–C266. The VWFA 2 domain maps to 268–457 (VCRGGGSGSA…GKKLQKQICV (190 aa)). N348 carries N-linked (GlcNAc...) asparagine glycosylation. Residues 471–499 (EAKVEGLLQALTRKLEAVSGRLAVLENRI) adopt a coiled-coil conformation.

Homotrimer. Part of a complex composed of MATN1 (via VWFA1 domain), type 2 collagens and type 6 collagens. Forms a complex (via covalent bonds) with ACAN; the interaction increases in abundance with increasing age of the organism via an increase in occupancy of MATN1 binding sites. Interacts with COMP. Post-translationally, N-glycosylated; reduces binding affinity for type 2 collagens. Expressed in femoral head articular cartilage. Expressed in the trachea and extraskeletal tissue around the eye.

It is found in the secreted. The protein localises to the extracellular space. The protein resides in the extracellular matrix. A major component of the extracellular matrix of non-articular cartilage. Binds to type 2 collagens and forms long concatenated protein networks as part of the extracellular matrix. Required for the network-like organization and bundling of collagen fibrils surrounding chondrocytes in the zones of maturation and hypertrophy. Required for mechanotransduction and adaption to mechanical loading in cartilage chondrocytes, resulting in an increase in expression of the extracellular matrix components ACAN and COL2A1. Acts as a moderator of angiogenesis in response to injury. The protein is Matrilin-1 of Mus musculus (Mouse).